A 716-amino-acid polypeptide reads, in one-letter code: DNA ligase (716 aa).

Residues Asp-49 to Asp-53, Ser-98 to Leu-99, and Glu-131 each bind NAD(+). The active-site N6-AMP-lysine intermediate is Lys-133. NAD(+) contacts are provided by Arg-154, Glu-191, Lys-308, and Lys-332. The Zn(2+) site is built by Cys-437, Cys-439, Cys-461, and Cys-467. The BRCT domain occupies Lys-638–Glu-716.

Belongs to the NAD-dependent DNA ligase family. LigA subfamily. Mg(2+) serves as cofactor. The cofactor is Mn(2+).

The enzyme catalyses NAD(+) + (deoxyribonucleotide)n-3'-hydroxyl + 5'-phospho-(deoxyribonucleotide)m = (deoxyribonucleotide)n+m + AMP + beta-nicotinamide D-nucleotide.. DNA ligase that catalyzes the formation of phosphodiester linkages between 5'-phosphoryl and 3'-hydroxyl groups in double-stranded DNA using NAD as a coenzyme and as the energy source for the reaction. It is essential for DNA replication and repair of damaged DNA. The sequence is that of DNA ligase from Bradyrhizobium sp. (strain BTAi1 / ATCC BAA-1182).